Reading from the N-terminus, the 1058-residue chain is Translation initiation factor IF-2 (1058 aa).

Residues 1–12 (MNDTKTPGDKTL) are compositionally biased toward basic and acidic residues. Residues 1 to 468 (MNDTKTPGDK…MTGHRGMQES (468 aa)) form a disordered region. Over residues 54–81 (APGEAGAPSGTPAAAPAATPAPAAAAPR) the composition is skewed to low complexity. Over residues 82 to 95 (PATPAPAAPRPAAP) the composition is skewed to pro residues. Low complexity predominate over residues 96 to 108 (ATPAQPAAEAKAP). Over residues 109 to 119 (APAPTPAPAAP) the composition is skewed to pro residues. 2 stretches are compositionally biased toward low complexity: residues 120-156 (AAPV…VEVP) and 164-228 (EPVA…QRPG). The span at 244–271 (RSGGPGSDRRGGPGGQNRPGQNRQGGSG) shows a compositional bias: gly residues. Over residues 292–364 (ARVREVEERR…ARKRFGEETG (73 aa)) the composition is skewed to basic and acidic residues. Residues 368 to 396 (GASAPSTSTARPLTPRPAGTTTTTGAPAA) are compositionally biased toward low complexity. Basic residues predominate over residues 452 to 461 (FRRRTQRMTG). One can recognise a tr-type G domain in the interval 555 to 725 (PRPPVVTIMG…SLQSEVLDLK (171 aa)). Positions 564-571 (GHVDHGKT) are G1. Residue 564 to 571 (GHVDHGKT) coordinates GTP. A G2 region spans residues 589-593 (GITQH). The segment at 611–614 (DTPG) is G3. Residues 611–615 (DTPGH) and 665–668 (NKID) each bind GTP. The segment at 665-668 (NKID) is G4. The segment at 701-703 (SAT) is G5.

It belongs to the TRAFAC class translation factor GTPase superfamily. Classic translation factor GTPase family. IF-2 subfamily.

It localises to the cytoplasm. One of the essential components for the initiation of protein synthesis. Protects formylmethionyl-tRNA from spontaneous hydrolysis and promotes its binding to the 30S ribosomal subunits. Also involved in the hydrolysis of GTP during the formation of the 70S ribosomal complex. The chain is Translation initiation factor IF-2 from Azorhizobium caulinodans (strain ATCC 43989 / DSM 5975 / JCM 20966 / LMG 6465 / NBRC 14845 / NCIMB 13405 / ORS 571).